Here is a 226-residue protein sequence, read N- to C-terminus: Lipoprotein-releasing system ATP-binding protein LolD (226 aa).

An ABC transporter domain is found at 5–226 (LKATNINKIY…LLRNGHWENY (222 aa)). 41 to 48 (GTSGSGKS) lines the ATP pocket.

It belongs to the ABC transporter superfamily. Lipoprotein translocase (TC 3.A.1.125) family. The complex is composed of two ATP-binding proteins (LolD) and two transmembrane proteins (LolC and LolE).

It is found in the cell inner membrane. Part of the ABC transporter complex LolCDE involved in the translocation of mature outer membrane-directed lipoproteins, from the inner membrane to the periplasmic chaperone, LolA. Responsible for the formation of the LolA-lipoprotein complex in an ATP-dependent manner. In Psychrobacter arcticus (strain DSM 17307 / VKM B-2377 / 273-4), this protein is Lipoprotein-releasing system ATP-binding protein LolD.